Consider the following 353-residue polypeptide: Photosystem II D2 protein (353 aa).

Position 2 is an N-acetylthreonine (Thr-2). Residue Thr-2 is modified to Phosphothreonine. The helical transmembrane segment at 41 to 61 (CAYFALGGWFTGTTFVTSWYT) threads the bilayer. His-118 lines the chlorophyll a pocket. Residues 125–141 (GFMLRQFELARSVQLRP) traverse the membrane as a helical segment. Residues Gln-130 and Asn-143 each coordinate pheophytin a. Residues 153–166 (VFVSVFLIYPLGQS) traverse the membrane as a helical segment. His-198 is a chlorophyll a binding site. The chain crosses the membrane as a helical span at residues 208–228 (AALLCAIHGATVENTLFEDGD). The a plastoquinone site is built by His-215 and Phe-262. His-215 is a binding site for Fe cation. Fe cation is bound at residue His-269. The chain crosses the membrane as a helical span at residues 279-295 (GLWMSALGVVGLALNLR).

Belongs to the reaction center PufL/M/PsbA/D family. In terms of assembly, PSII is composed of 1 copy each of membrane proteins PsbA, PsbB, PsbC, PsbD, PsbE, PsbF, PsbH, PsbI, PsbJ, PsbK, PsbL, PsbM, PsbT, PsbX, PsbY, PsbZ, Psb30/Ycf12, at least 3 peripheral proteins of the oxygen-evolving complex and a large number of cofactors. It forms dimeric complexes. The cofactor is The D1/D2 heterodimer binds P680, chlorophylls that are the primary electron donor of PSII, and subsequent electron acceptors. It shares a non-heme iron and each subunit binds pheophytin, quinone, additional chlorophylls, carotenoids and lipids. There is also a Cl(-1) ion associated with D1 and D2, which is required for oxygen evolution. The PSII complex binds additional chlorophylls, carotenoids and specific lipids..

It is found in the plastid. It localises to the chloroplast thylakoid membrane. It carries out the reaction 2 a plastoquinone + 4 hnu + 2 H2O = 2 a plastoquinol + O2. Functionally, photosystem II (PSII) is a light-driven water:plastoquinone oxidoreductase that uses light energy to abstract electrons from H(2)O, generating O(2) and a proton gradient subsequently used for ATP formation. It consists of a core antenna complex that captures photons, and an electron transfer chain that converts photonic excitation into a charge separation. The D1/D2 (PsbA/PsbD) reaction center heterodimer binds P680, the primary electron donor of PSII as well as several subsequent electron acceptors. D2 is needed for assembly of a stable PSII complex. This Dioscorea elephantipes (Elephant's foot yam) protein is Photosystem II D2 protein.